The sequence spans 418 residues: Mitochondrial outer membrane protein SLC25A46 (418 aa).

2 positions are modified to phosphoserine: serine 32 and serine 35. The residue at position 45 (threonine 45) is a Phosphothreonine. The segment at proline 46–glutamine 96 is disordered. The Solcar 1 repeat unit spans residues glutamine 96 to proline 187. The next 6 helical transmembrane spans lie at phenylalanine 103–leucine 123, phenylalanine 167–proline 187, histidine 202–isoleucine 222, leucine 258–isoleucine 278, phenylalanine 314–leucine 334, and valine 382–isoleucine 402. A Solcar 2 repeat occupies aspartate 311 to asparagine 416.

The protein belongs to the mitochondrial carrier (TC 2.A.29) family. Associates with the mitochondrial contact site and cristae organizing system (MICOS) complex. May associate with the endoplasmic reticulum membrane protein complex (EMC). As to expression, widely expressed. Highly expressed in hindbrain, spinal cord and brain coronal sections containing corpus callosum, fornix, optic chiasm, thalamus, hypothalamus, midbrain, pons and cerebellum.

It localises to the mitochondrion outer membrane. In terms of biological role, transmembrane protein of the mitochondrial outer membrane that controls mitochondrial organization. May regulate the assembly of the MICOS (mitochondrial contact site and cristae organizing system) complex which is essential to the biogenesis and dynamics of mitochondrial cristae, the inwards folds of the inner mitochondrial membrane. Through its interaction with the EMC (endoplasmic reticulum membrane protein complex), could regulate mitochondrial lipid homeostasis and thereby mitochondrial fission. In Rattus norvegicus (Rat), this protein is Mitochondrial outer membrane protein SLC25A46.